Reading from the N-terminus, the 460-residue chain is Bifunctional protein GlmU (460 aa).

Residues 1–229 (MTNYAIILAA…FNESLGVNDR (229 aa)) are pyrophosphorylase. UDP-N-acetyl-alpha-D-glucosamine-binding positions include 8-11 (LAAG), K22, Q72, and 77-78 (GT). Residue D102 participates in Mg(2+) binding. UDP-N-acetyl-alpha-D-glucosamine-binding residues include G139, E154, N169, and N227. N227 contributes to the Mg(2+) binding site. A linker region spans residues 230–250 (VALATAETVMRQRITQKHMVN). An N-acetyltransferase region spans residues 251-460 (GVTFHNPETV…RLAHHPSRSK (210 aa)). UDP-N-acetyl-alpha-D-glucosamine contacts are provided by R332 and K350. The active-site Proton acceptor is H362. 2 residues coordinate UDP-N-acetyl-alpha-D-glucosamine: Y365 and N376. Residues A379, 385-386 (NY), S404, A422, and R439 contribute to the acetyl-CoA site.

In the N-terminal section; belongs to the N-acetylglucosamine-1-phosphate uridyltransferase family. The protein in the C-terminal section; belongs to the transferase hexapeptide repeat family. As to quaternary structure, homotrimer. Requires Mg(2+) as cofactor.

It localises to the cytoplasm. It carries out the reaction alpha-D-glucosamine 1-phosphate + acetyl-CoA = N-acetyl-alpha-D-glucosamine 1-phosphate + CoA + H(+). The enzyme catalyses N-acetyl-alpha-D-glucosamine 1-phosphate + UTP + H(+) = UDP-N-acetyl-alpha-D-glucosamine + diphosphate. It participates in nucleotide-sugar biosynthesis; UDP-N-acetyl-alpha-D-glucosamine biosynthesis; N-acetyl-alpha-D-glucosamine 1-phosphate from alpha-D-glucosamine 6-phosphate (route II): step 2/2. It functions in the pathway nucleotide-sugar biosynthesis; UDP-N-acetyl-alpha-D-glucosamine biosynthesis; UDP-N-acetyl-alpha-D-glucosamine from N-acetyl-alpha-D-glucosamine 1-phosphate: step 1/1. The protein operates within bacterial outer membrane biogenesis; LPS lipid A biosynthesis. Functionally, catalyzes the last two sequential reactions in the de novo biosynthetic pathway for UDP-N-acetylglucosamine (UDP-GlcNAc). The C-terminal domain catalyzes the transfer of acetyl group from acetyl coenzyme A to glucosamine-1-phosphate (GlcN-1-P) to produce N-acetylglucosamine-1-phosphate (GlcNAc-1-P), which is converted into UDP-GlcNAc by the transfer of uridine 5-monophosphate (from uridine 5-triphosphate), a reaction catalyzed by the N-terminal domain. In Streptococcus pyogenes serotype M3 (strain ATCC BAA-595 / MGAS315), this protein is Bifunctional protein GlmU.